A 298-amino-acid chain; its full sequence is Tyrosine recombinase XerC (298 aa).

A Core-binding (CB) domain is found at 1–83 (MHAAVERFLH…ALSRFADHLV (83 aa)). The Tyr recombinase domain occupies 104-283 (HLPRPVDVDQ…DWQHLADAYD (180 aa)). Residues Arg-144, Lys-166, His-235, Arg-238, and His-261 contribute to the active site. The active-site O-(3'-phospho-DNA)-tyrosine intermediate is the Tyr-270.

It belongs to the 'phage' integrase family. XerC subfamily. As to quaternary structure, forms a cyclic heterotetrameric complex composed of two molecules of XerC and two molecules of XerD.

It localises to the cytoplasm. Its function is as follows. Site-specific tyrosine recombinase, which acts by catalyzing the cutting and rejoining of the recombining DNA molecules. The XerC-XerD complex is essential to convert dimers of the bacterial chromosome into monomers to permit their segregation at cell division. It also contributes to the segregational stability of plasmids. The chain is Tyrosine recombinase XerC from Chromohalobacter salexigens (strain ATCC BAA-138 / DSM 3043 / CIP 106854 / NCIMB 13768 / 1H11).